A 462-amino-acid polypeptide reads, in one-letter code: Bindin (462 aa).

Positions methionine 1–alanine 19 are cleaved as a signal peptide. Residues glutamate 20–arginine 244 constitute a propeptide that is removed on maturation. Disordered regions lie at residues aspartate 155–aspartate 194 and arginine 221–glycine 278. The fucose-binding domain stretch occupies residues leucine 372–asparagine 380.

This sequence belongs to the bindin family.

The protein localises to the cytoplasmic vesicle. The protein resides in the secretory vesicle. It is found in the acrosome lumen. Functionally, species-specific sea urchin sperm protein required for adhesion of sperm to the egg surface during fertilization. Bindin coats the acrosomal process after it is externalized by the acrosome reaction. It binds to sulfated, fucose-containing polysaccharides on the vitelline layer receptor proteoglycans which cover the egg plasma membrane. In Lytechinus variegatus (Green sea urchin), this protein is Bindin.